The chain runs to 787 residues: Protein translocase subunit SecA (787 aa).

ATP is bound by residues Gln85, 103-107, and Asp492; that span reads GEGKT.

The protein belongs to the SecA family. Monomer and homodimer. Part of the essential Sec protein translocation apparatus which comprises SecA, SecYEG and auxiliary proteins SecDF. Other proteins may also be involved.

Its subcellular location is the cell membrane. It localises to the cytoplasm. The enzyme catalyses ATP + H2O + cellular proteinSide 1 = ADP + phosphate + cellular proteinSide 2.. In terms of biological role, part of the Sec protein translocase complex. Interacts with the SecYEG preprotein conducting channel. Has a central role in coupling the hydrolysis of ATP to the transfer of proteins into and across the cell membrane, serving as an ATP-driven molecular motor driving the stepwise translocation of polypeptide chains across the membrane. In Latilactobacillus sakei subsp. sakei (strain 23K) (Lactobacillus sakei subsp. sakei), this protein is Protein translocase subunit SecA.